A 598-amino-acid chain; its full sequence is Elongation factor 4 (598 aa).

The tr-type G domain maps to 4–186 (INIRNFAIIA…AIVSRLPAPS (183 aa)). GTP is bound by residues 16-21 (DHGKST) and 133-136 (NKID).

Belongs to the TRAFAC class translation factor GTPase superfamily. Classic translation factor GTPase family. LepA subfamily.

The protein localises to the cell inner membrane. It catalyses the reaction GTP + H2O = GDP + phosphate + H(+). Its function is as follows. Required for accurate and efficient protein synthesis under certain stress conditions. May act as a fidelity factor of the translation reaction, by catalyzing a one-codon backward translocation of tRNAs on improperly translocated ribosomes. Back-translocation proceeds from a post-translocation (POST) complex to a pre-translocation (PRE) complex, thus giving elongation factor G a second chance to translocate the tRNAs correctly. Binds to ribosomes in a GTP-dependent manner. The chain is Elongation factor 4 from Ehrlichia ruminantium (strain Gardel).